The chain runs to 287 residues: Methylamine utilization ferredoxin-type protein MauN (287 aa).

4Fe-4S ferredoxin-type domains follow at residues 218–248 (RVAA…PALK) and 251–280 (GSTL…MTMR). [4Fe-4S] cluster contacts are provided by Cys-227, Cys-230, Cys-233, Cys-237, Cys-260, Cys-263, Cys-266, and Cys-270.

The protein operates within one-carbon metabolism; methylamine degradation. In terms of biological role, involved in electron transfer. The protein is Methylamine utilization ferredoxin-type protein MauN (mauN) of Methylorubrum extorquens (strain ATCC 14718 / DSM 1338 / JCM 2805 / NCIMB 9133 / AM1) (Methylobacterium extorquens).